The primary structure comprises 201 residues: Protein TraJ (201 aa).

It localises to the cytoplasm. Its function is as follows. This protein is essential for positively regulating the expression of transfer genes that are involved in the conjugal transfer of DNA between bacterial cells. The protein is Protein TraJ (traJ) of Escherichia coli.